Here is a 453-residue protein sequence, read N- to C-terminus: Secreted triacylglycerol lipase LIP3 (453 aa).

The N-terminal stretch at 1 to 19 (MKLGIVAFTLISFAAQALA) is a signal peptide. Asn-98 is a glycosylation site (N-linked (GlcNAc...) asparagine). A disulfide bond links Cys-115 and Cys-284. Ser-197 acts as the Nucleophile in catalysis. Asn-230 is a glycosylation site (N-linked (GlcNAc...) asparagine). Residues Asp-344 and His-378 contribute to the active site. The cysteines at positions 360 and 406 are disulfide-linked.

The protein belongs to the AB hydrolase superfamily. Lipase family. Class Lip subfamily.

The protein resides in the secreted. It is found in the cell wall. It catalyses the reaction a triacylglycerol + H2O = a diacylglycerol + a fatty acid + H(+). It carries out the reaction a monoacylglycerol + H2O = glycerol + a fatty acid + H(+). The enzyme catalyses a diacylglycerol + H2O = a monoacylglycerol + a fatty acid + H(+). In terms of biological role, secreted lipase involved in Dandruff and seborrheic dermatitis (D/SD) probably via lipase-mediated breakdown of sebaceous lipids and release of irritating free fatty acids. Has triacylglycerol lipase activity and is able to hydrolyze triolein, tristearin, trilinolein, tripalmitoylglycerol and trihexadecenoin. Hydrolyzes diacylglycerols such as distearin, dilinolein, dipalmitoylglycerol and dipalmitolein. Mostly converts monoolein to di- and triolein, while free fatty acids are only produced in low amounts. This is Secreted triacylglycerol lipase LIP3 from Malassezia globosa (strain ATCC MYA-4612 / CBS 7966) (Dandruff-associated fungus).